The primary structure comprises 356 residues: Uroporphyrinogen decarboxylase (356 aa).

Residues 27 to 31, D77, Y154, T209, and H327 contribute to the substrate site; that span reads RQAGR.

This sequence belongs to the uroporphyrinogen decarboxylase family. In terms of assembly, homodimer.

The protein localises to the cytoplasm. It carries out the reaction uroporphyrinogen III + 4 H(+) = coproporphyrinogen III + 4 CO2. Its pathway is porphyrin-containing compound metabolism; protoporphyrin-IX biosynthesis; coproporphyrinogen-III from 5-aminolevulinate: step 4/4. Catalyzes the decarboxylation of four acetate groups of uroporphyrinogen-III to yield coproporphyrinogen-III. This is Uroporphyrinogen decarboxylase from Hamiltonella defensa subsp. Acyrthosiphon pisum (strain 5AT).